Reading from the N-terminus, the 122-residue chain is Double-headed protease inhibitor, submandibular gland (122 aa).

Kazal-like domains are found at residues 10–70 and 71–121; these read GGRK…NCDI and ECTQ…QCES. 6 disulfides stabilise this stretch: Cys-16/Cys-50, Cys-28/Cys-47, Cys-36/Cys-68, Cys-72/Cys-101, Cys-79/Cys-98, and Cys-87/Cys-119.

It is found in the secreted. This inhibitor is composed of two homologous actively inhibiting halves: one which inhibits trypsin, the other which inhibits elastase. The protein is Double-headed protease inhibitor, submandibular gland of Meles meles (Eurasian badger).